A 38-amino-acid polypeptide reads, in one-letter code: 4 kDa defensin (38 aa).

Cystine bridges form between Cys4–Cys25, Cys11–Cys33, and Cys15–Cys35.

It belongs to the invertebrate defensin family. Type 2 subfamily.

It is found in the secreted. Its function is as follows. Dual-function peptide with antimicrobial and potassium channel-blocking activities. Shows inhibitory activity against Gram-positive bacteria such as M.luteus, S.aureus, B.subtilis, and M.luteus as well as methicillin-resistant S.aureus (MIC=0.1-20 uM). Does not act on bacteria by disrupting membranes. Also moderately inhibits Kv1.1/KCNA1, Kv1.2/KCNA2, and Kv1.3/KCNA3 potassium channels. Inhibits potassium channels by interacting with the pore region. Does not show hemolytic activity. The chain is 4 kDa defensin from Leiurus hebraeus (Hebrew deathstalker scorpion).